Here is a 711-residue protein sequence, read N- to C-terminus: Polyribonucleotide nucleotidyltransferase (711 aa).

Positions 486 and 492 each coordinate Mg(2+). A KH domain is found at 553–612 (PRIHTIKINPDKIKDVIGKGGSVIRALTEETGTTIEIEDDGTVKIAATDGEKAKHAIRRI). An S1 motif domain is found at 622–690 (GRIYNGKVTR…RQGRVRLSIK (69 aa)). A disordered region spans residues 690-711 (KEATEQSQPAAAPEAPAAEQGE). The span at 694-711 (EQSQPAAAPEAPAAEQGE) shows a compositional bias: low complexity.

This sequence belongs to the polyribonucleotide nucleotidyltransferase family. As to quaternary structure, component of the RNA degradosome, which is a multiprotein complex involved in RNA processing and mRNA degradation. Mg(2+) is required as a cofactor.

The protein localises to the cytoplasm. It carries out the reaction RNA(n+1) + phosphate = RNA(n) + a ribonucleoside 5'-diphosphate. Functionally, involved in mRNA degradation. Catalyzes the phosphorolysis of single-stranded polyribonucleotides processively in the 3'- to 5'-direction. This is Polyribonucleotide nucleotidyltransferase from Citrobacter koseri (strain ATCC BAA-895 / CDC 4225-83 / SGSC4696).